The sequence spans 984 residues: UPF0592 protein YDL073W (984 aa).

The tract at residues 675–712 is disordered; it reads KNHKIMDGYEGGQENEDNDEDSEDSGSHKNKRKEGNSS. Residues 687–698 show a composition bias toward acidic residues; the sequence is QENEDNDEDSED.

It belongs to the UPF0592 family.

The sequence is that of UPF0592 protein YDL073W from Saccharomyces cerevisiae (strain ATCC 204508 / S288c) (Baker's yeast).